The sequence spans 216 residues: Leucyl/phenylalanyl-tRNA--protein transferase (216 aa).

It belongs to the L/F-transferase family.

It is found in the cytoplasm. It catalyses the reaction N-terminal L-lysyl-[protein] + L-leucyl-tRNA(Leu) = N-terminal L-leucyl-L-lysyl-[protein] + tRNA(Leu) + H(+). The catalysed reaction is N-terminal L-arginyl-[protein] + L-leucyl-tRNA(Leu) = N-terminal L-leucyl-L-arginyl-[protein] + tRNA(Leu) + H(+). The enzyme catalyses L-phenylalanyl-tRNA(Phe) + an N-terminal L-alpha-aminoacyl-[protein] = an N-terminal L-phenylalanyl-L-alpha-aminoacyl-[protein] + tRNA(Phe). Its function is as follows. Functions in the N-end rule pathway of protein degradation where it conjugates Leu, Phe and, less efficiently, Met from aminoacyl-tRNAs to the N-termini of proteins containing an N-terminal arginine or lysine. The sequence is that of Leucyl/phenylalanyl-tRNA--protein transferase from Maricaulis maris (strain MCS10) (Caulobacter maris).